The primary structure comprises 373 residues: Cobalt-precorrin-5B C(1)-methyltransferase (373 aa).

This sequence belongs to the CbiD family.

The enzyme catalyses Co-precorrin-5B + S-adenosyl-L-methionine = Co-precorrin-6A + S-adenosyl-L-homocysteine. It participates in cofactor biosynthesis; adenosylcobalamin biosynthesis; cob(II)yrinate a,c-diamide from sirohydrochlorin (anaerobic route): step 6/10. Functionally, catalyzes the methylation of C-1 in cobalt-precorrin-5B to form cobalt-precorrin-6A. This Listeria welshimeri serovar 6b (strain ATCC 35897 / DSM 20650 / CCUG 15529 / CIP 8149 / NCTC 11857 / SLCC 5334 / V8) protein is Cobalt-precorrin-5B C(1)-methyltransferase.